A 434-amino-acid polypeptide reads, in one-letter code: Septin-6 (434 aa).

Ala-2 bears the N-acetylalanine mark. At Ser-27 the chain carries Phosphoserine. The Septin-type G domain maps to 39–305 (QGFCFNILCV…ELYRRCKLEE (267 aa)). The G1 motif stretch occupies residues 49–56 (GETGLGKS). Residues 49–56 (GETGLGKS), Gly-104, 185–193 (KADAISKSE), Gly-239, and Arg-254 each bind GTP. Residues 101 to 104 (STVG) are G3 motif. A G4 motif region spans residues 184-187 (AKAD). The stretch at 321–409 (QETYEAKRNE…KTAAELLQSQ (89 aa)) forms a coiled coil. Lys-367 carries the N6-acetyllysine modification. A disordered region spans residues 405–434 (LLQSQGSQAGGSQTLKRDKEKKNNPWLCTE). Positions 407–417 (QSQGSQAGGSQ) are enriched in low complexity. A Phosphoserine modification is found at Ser-416. Thr-418 is modified (phosphothreonine).

The protein belongs to the TRAFAC class TrmE-Era-EngA-EngB-Septin-like GTPase superfamily. Septin GTPase family. As to quaternary structure, septins polymerize into heterooligomeric protein complexes that form filaments, and associate with cellular membranes, actin filaments and microtubules. GTPase activity is required for filament formation. Filaments are assembled from asymmetrical heterotrimers, composed of SEPTIN2, SEPTIN6 and SEPTIN7 that associate head-to-head to form a hexameric unit. Within the trimer, directly interacts with SEPTIN2 and SEPTIN7. Also interacts with SEPTIN9 and SEPTIN12. Interaction with SEPTIN12 alters filament structure. Component of a septin core octameric complex consisting of SEPTIN12, SEPTIN7, SEPTIN6 and SEPTIN2 or SEPTIN4 in the order 12-7-6-2-2-6-7-12 or 12-7-6-4-4-6-7-12 and located in the sperm annulus. Interacts with SOCS7. Interacts with HNRNPA1. In terms of assembly, (Microbial infection) Interacts with HCV NS5B. Widely expressed.

It is found in the cytoplasm. The protein resides in the cytoskeleton. Its subcellular location is the spindle. It localises to the chromosome. The protein localises to the centromere. It is found in the kinetochore. The protein resides in the cleavage furrow. Its subcellular location is the midbody. It localises to the cell projection. The protein localises to the cilium. It is found in the flagellum. In terms of biological role, filament-forming cytoskeletal GTPase. Required for normal organization of the actin cytoskeleton. Involved in cytokinesis. May play a role in HCV RNA replication. Forms a filamentous structure with SEPTIN12, SEPTIN6, SEPTIN2 and probably SEPTIN4 at the sperm annulus which is required for the structural integrity and motility of the sperm tail during postmeiotic differentiation. This chain is Septin-6, found in Homo sapiens (Human).